The chain runs to 399 residues: uncharacterized protein (399 aa).

10 consecutive transmembrane segments (helical) span residues 7-27, 33-53, 79-99, 131-151, 153-173, 208-228, 242-262, 296-316, 335-355, and 357-377; these read FSAL…LYLI, FLQI…FEVP, AFFP…IWAL, LLIT…SLNI, FPFL…SVFI, VLLI…ISRY, SLGY…TLTI, PLGI…HPIV, LNSG…GIIS, and AFGL…PIIL.

This sequence belongs to the major facilitator superfamily. Drug:H(+) antiporter-3 (DHA3) (TC 2.A.1.21) family.

The protein resides in the cell membrane. This is an uncharacterized protein from Bacillus subtilis (strain 168).